Reading from the N-terminus, the 147-residue chain is Peptide methionine sulfoxide reductase MsrB 2 (147 aa).

A MsrB domain is found at 6-129 (TDEEVSKLTP…NSAALRFIPR (124 aa)). The active-site Nucleophile is cysteine 118.

This sequence belongs to the MsrB Met sulfoxide reductase family.

It carries out the reaction L-methionyl-[protein] + [thioredoxin]-disulfide + H2O = L-methionyl-(R)-S-oxide-[protein] + [thioredoxin]-dithiol. In Rhizobium meliloti (strain 1021) (Ensifer meliloti), this protein is Peptide methionine sulfoxide reductase MsrB 2 (msrB2).